The chain runs to 449 residues: Heterogeneous nuclear ribonucleoprotein H (449 aa).

Residue Met1 is modified to N-acetylmethionine. Met2 is subject to N-acetylmethionine; in Heterogeneous nuclear ribonucleoprotein H, N-terminally processed. Residues 11–90 enclose the RRM 1 domain; it reads FVVKVRGLPW…RYVEVFKSNN (80 aa). Position 23 is a phosphoserine (Ser23). Residue Lys35 forms a Glycyl lysine isopeptide (Lys-Gly) (interchain with G-Cter in SUMO2) linkage. Phosphoserine is present on residues Ser54 and Ser63. Glycyl lysine isopeptide (Lys-Gly) (interchain with G-Cter in SUMO2) cross-links involve residues Lys87 and Lys98. Residues 111 to 188 form the RRM 2 domain; that stretch reads GFVRLRGLPF…RYIEIFKSSR (78 aa). A Dimethylated arginine; alternate modification is found at Arg233. The residue at position 233 (Arg233) is an Omega-N-methylarginine; alternate. The stretch at 234–249 is one 1-1 repeat; it reads GAYGGGYGGYDDYNGY. Positions 234–433 are 2 X 16 AA Gly-rich approximate repeats; the sequence is GAYGGGYGGY…YGGQSSMSGY (200 aa). A Phosphotyrosine modification is found at Tyr246. The RRM 3 domain occupies 289–364; sequence HCVHMRGLPY…RYVELFLNST (76 aa). Position 310 is a phosphoserine (Ser310). Tandem repeats lie at residues 354-372, 374-392, and 418-433. The tract at residues 354–392 is 2 X 19 AA perfect repeats; that stretch reads HRYVELFLNSTAGASGGAYEHRYVELFLNSTAGASGGAY.

Part of a ternary complex containing FUBP2, PTBP1, PTBP2 and HNRNPH1. Identified in the spliceosome C complex. Interacts with IGF2BP1. Interacts with CUGBP1; the interaction is RNA-dependent. Interacts with MBNL1; the interaction in RNA-independent.

The protein resides in the nucleus. Its subcellular location is the nucleoplasm. This protein is a component of the heterogeneous nuclear ribonucleoprotein (hnRNP) complexes which provide the substrate for the processing events that pre-mRNAs undergo before becoming functional, translatable mRNAs in the cytoplasm. Mediates pre-mRNA alternative splicing regulation. Inhibits, together with CUGBP1, insulin receptor (IR) pre-mRNA exon 11 inclusion in myoblast. Binds to the IR RNA. Binds poly(RG). The sequence is that of Heterogeneous nuclear ribonucleoprotein H (Hnrnph1) from Rattus norvegicus (Rat).